The following is a 376-amino-acid chain: Protein-arginine rhamnosyltransferase (376 aa).

DTDP-beta-L-rhamnose is bound by residues 13–16 (NYGD), Tyr-192, 252–254 (MAQ), and 270–274 (RGEDS). 14 to 15 (YG) is a binding site for dTDP. Catalysis depends on Asp-16, which acts as the Proton acceptor. Residues Tyr-192, 252–254 (MAQ), and 270–274 (RGEDS) each bind dTDP. Residue Glu-272 is part of the active site.

It belongs to the glycosyltransferase 104 family.

It carries out the reaction dTDP-beta-L-rhamnose + L-arginyl-[protein] = N(omega)-(alpha-L-rhamnosyl)-L-arginyl-[protein] + dTDP + H(+). Its function is as follows. Protein-arginine rhamnosyltransferase that catalyzes the transfer of a single rhamnose to elongation factor P (EF-P) on 'Lys-32', a modification required for EF-P-dependent rescue of polyproline stalled ribosomes. This chain is Protein-arginine rhamnosyltransferase, found in Pseudomonas aeruginosa (strain ATCC 15692 / DSM 22644 / CIP 104116 / JCM 14847 / LMG 12228 / 1C / PRS 101 / PAO1).